The chain runs to 395 residues: Acetate kinase 2 (395 aa).

Asn8 lines the Mg(2+) pocket. Lys15 contacts ATP. Arg89 serves as a coordination point for substrate. Asp146 functions as the Proton donor/acceptor in the catalytic mechanism. ATP is bound by residues 206-210 (HIGNG), 283-285 (DMR), and 331-335 (GVGEN). Glu383 serves as a coordination point for Mg(2+).

The protein belongs to the acetokinase family. In terms of assembly, homodimer. It depends on Mg(2+) as a cofactor. The cofactor is Mn(2+).

Its subcellular location is the cytoplasm. It carries out the reaction acetate + ATP = acetyl phosphate + ADP. The protein operates within metabolic intermediate biosynthesis; acetyl-CoA biosynthesis; acetyl-CoA from acetate: step 1/2. Functionally, catalyzes the formation of acetyl phosphate from acetate and ATP. Can also catalyze the reverse reaction. The chain is Acetate kinase 2 from Lactococcus lactis subsp. lactis (strain IL1403) (Streptococcus lactis).